A 450-amino-acid chain; its full sequence is Chromosomal replication initiator protein DnaA (450 aa).

The interval 1–77 (MTENEQIFWN…EVYNAQIAVD (77 aa)) is domain I, interacts with DnaA modulators. The tract at residues 77–109 (DYVYEDDLMIEQQHQGQQGYTEQAFQQLPAVQS) is domain II. A domain III, AAA+ region region spans residues 110-328 (DLNPKYSFDN…GALKDISLVA (219 aa)). ATP-binding residues include Gly154, Gly156, Lys157, and Thr158. Residues 329–450 (NFKQIDTITV…EIETIKNKIK (122 aa)) form a domain IV, binds dsDNA region.

Belongs to the DnaA family. In terms of assembly, oligomerizes as a right-handed, spiral filament on DNA at oriC.

The protein resides in the cytoplasm. In terms of biological role, plays an essential role in the initiation and regulation of chromosomal replication. ATP-DnaA binds to the origin of replication (oriC) to initiate formation of the DNA replication initiation complex once per cell cycle. Binds the DnaA box (a 9 base pair repeat at the origin) and separates the double-stranded (ds)DNA. Forms a right-handed helical filament on oriC DNA; dsDNA binds to the exterior of the filament while single-stranded (ss)DNA is stabiized in the filament's interior. The ATP-DnaA-oriC complex binds and stabilizes one strand of the AT-rich DNA unwinding element (DUE), permitting loading of DNA polymerase. After initiation quickly degrades to an ADP-DnaA complex that is not apt for DNA replication. Binds acidic phospholipids. This Streptococcus equi subsp. equi (strain 4047) protein is Chromosomal replication initiator protein DnaA.